A 313-amino-acid chain; its full sequence is Small ribosomal subunit protein uS2 (313 aa).

Positions 228-256 (RQEDKAAEAQDKDAQDTEDNKGARPRGAE) are enriched in basic and acidic residues. Positions 228 to 313 (RQEDKAAEAQ…VSKAGDKPKK (86 aa)) are disordered.

Belongs to the universal ribosomal protein uS2 family.

This Amoebophilus asiaticus (strain 5a2) protein is Small ribosomal subunit protein uS2.